Consider the following 272-residue polypeptide: MEFRFNCHPLFRQRIVRINNSLLPTGFVAQHRREALDATAQISEIINFVGQLSAQAQGLSNPVTTSQKLRNSDHHIYLMFESNQKHGLVVGILKVGRKSLYVFDQNGETVNVTAPCVLDFYVHESRQRGGLGRELFDHMLKEENIHPEEMAIDRPSEKLLGFLQKHYGLYKKIPQMNNFVVYEGFFANKHHASDIDGRRMHITASPNTNLFGPTFTTVGEQRRSSSQTRQQVVSPPVVQQPPVGRYAAKRPSCSMAQIIHNSPTTVSTEPNR.

The N-acetyltransferase domain occupies 1 to 186 (MEFRFNCHPL…NNFVVYEGFF (186 aa)). Residues 120 to 133 (FYVHESRQRGGLGR) and 156 to 165 (SEKLLGFLQK) contribute to the acetyl-CoA site. Positions 216 to 244 (TTVGEQRRSSSQTRQQVVSPPVVQQPPVG) are disordered. A compositionally biased stretch (low complexity) spans 224 to 244 (SSSQTRQQVVSPPVVQQPPVG).

This sequence belongs to the acetyltransferase ATAT1 family.

The catalysed reaction is L-lysyl-[alpha-tubulin] + acetyl-CoA = N(6)-acetyl-L-lysyl-[alpha-tubulin] + CoA + H(+). Specifically acetylates 'Lys-40' in alpha-tubulin on the lumenal side of microtubules. Promotes microtubule destabilization and accelerates microtubule dynamics; this activity may be independent of acetylation activity. Acetylates alpha-tubulin with a slow enzymatic rate, due to a catalytic site that is not optimized for acetyl transfer. Enters the microtubule through each end and diffuses quickly throughout the lumen of microtubules. Acetylates only long/old microtubules because of its slow acetylation rate since it does not have time to act on dynamically unstable microtubules before the enzyme is released. The protein is Alpha-tubulin N-acetyltransferase of Aedes aegypti (Yellowfever mosquito).